The chain runs to 632 residues: Bifunctional protein GlmU (632 aa).

The pyrophosphorylase stretch occupies residues Met-1 to Arg-229. UDP-N-acetyl-alpha-D-glucosamine-binding positions include Leu-11–Gly-14, Lys-25, Gln-76, and Gly-81–Thr-82. Asp-106 serves as a coordination point for Mg(2+). Positions 143, 158, 173, and 227 each coordinate UDP-N-acetyl-alpha-D-glucosamine. Asn-227 contributes to the Mg(2+) binding site. A linker region spans residues Arg-230–Ala-250. An N-acetyltransferase region spans residues Gly-251 to Gln-632. Positions 332 and 350 each coordinate UDP-N-acetyl-alpha-D-glucosamine. Residue His-362 is the Proton acceptor of the active site. UDP-N-acetyl-alpha-D-glucosamine is bound by residues Tyr-365 and Asn-376. Acetyl-CoA contacts are provided by residues Ala-379, Asn-385 to Tyr-386, Ala-422, and Arg-441. The interval Val-600–Gln-632 is disordered. The segment covering Pro-621–Gln-632 has biased composition (basic and acidic residues).

This sequence in the N-terminal section; belongs to the N-acetylglucosamine-1-phosphate uridyltransferase family. The protein in the C-terminal section; belongs to the transferase hexapeptide repeat family. As to quaternary structure, homotrimer. Mg(2+) is required as a cofactor.

The protein resides in the cytoplasm. The catalysed reaction is alpha-D-glucosamine 1-phosphate + acetyl-CoA = N-acetyl-alpha-D-glucosamine 1-phosphate + CoA + H(+). It catalyses the reaction N-acetyl-alpha-D-glucosamine 1-phosphate + UTP + H(+) = UDP-N-acetyl-alpha-D-glucosamine + diphosphate. It functions in the pathway nucleotide-sugar biosynthesis; UDP-N-acetyl-alpha-D-glucosamine biosynthesis; N-acetyl-alpha-D-glucosamine 1-phosphate from alpha-D-glucosamine 6-phosphate (route II): step 2/2. It participates in nucleotide-sugar biosynthesis; UDP-N-acetyl-alpha-D-glucosamine biosynthesis; UDP-N-acetyl-alpha-D-glucosamine from N-acetyl-alpha-D-glucosamine 1-phosphate: step 1/1. Its pathway is bacterial outer membrane biogenesis; LPS lipid A biosynthesis. Catalyzes the last two sequential reactions in the de novo biosynthetic pathway for UDP-N-acetylglucosamine (UDP-GlcNAc). The C-terminal domain catalyzes the transfer of acetyl group from acetyl coenzyme A to glucosamine-1-phosphate (GlcN-1-P) to produce N-acetylglucosamine-1-phosphate (GlcNAc-1-P), which is converted into UDP-GlcNAc by the transfer of uridine 5-monophosphate (from uridine 5-triphosphate), a reaction catalyzed by the N-terminal domain. The protein is Bifunctional protein GlmU of Synechococcus sp. (strain JA-2-3B'a(2-13)) (Cyanobacteria bacterium Yellowstone B-Prime).